Reading from the N-terminus, the 246-residue chain is Small ribosomal subunit protein uS2 (246 aa).

It belongs to the universal ribosomal protein uS2 family.

This Pseudomonas aeruginosa (strain LESB58) protein is Small ribosomal subunit protein uS2.